The following is a 228-amino-acid chain: MIDTQALRAEQRLRASEVIRQDDFLVVPPAFIAGADVGFEQEGAVTRAAIAILRYPSLELVEYQVARVATTMPYIPGFLSFREYPALLAAWEQLHQKPDLVLVDGHGISHPRRLGVASHFGLLVNVPTIGVAKKRLCGKFAPLDEATDALAPLEDKGEQLGWVWRSKARCNPLFISTGHRVGADSALAWVQRCMAGYRLPEPTRWADAIASRRPAFQRWLQQHPEVSQ.

The Mg(2+) site is built by aspartate 36 and aspartate 104.

This sequence belongs to the endonuclease V family. Mg(2+) is required as a cofactor.

The protein localises to the cytoplasm. The enzyme catalyses Endonucleolytic cleavage at apurinic or apyrimidinic sites to products with a 5'-phosphate.. DNA repair enzyme involved in the repair of deaminated bases. Selectively cleaves double-stranded DNA at the second phosphodiester bond 3' to a deoxyinosine leaving behind the intact lesion on the nicked DNA. This chain is Endonuclease V, found in Serratia proteamaculans (strain 568).